We begin with the raw amino-acid sequence, 341 residues long: MATIKDVAKRANVSTTTVSHVINKTRFVAEETRNAVWAAIKELHYSPSAVARSLKVNHTKSIGLLATSSEAAYFAEIIEAVEKNCFQKGYTLILGNAWNNLEKQRAYLSMMAQKRVDGLLVMCSEYPEPLLSMLEEYRHIPMVVMDWGEAKADFTDTVIDNAFAGGYMAGRYLVERGHRDIGVIPGPLERNTGAGRLAGFMKAMEEALINVPDNWIVQGDFEPESGYHAMQQILSQSHRPTAVFCGGDIMAMGALCAADEMGLRVPQDVSVIGYDNVRNARFFTPALTTIHQPKDSLGETAFNMLLDRIVNKREESQSIEVHPRLVERRSVADGPFRDYRR.

The 55-residue stretch at 2–56 (ATIKDVAKRANVSTTTVSHVINKTRFVAEETRNAVWAAIKELHYSPSAVARSLKV) folds into the HTH lacI-type domain. Residues 4 to 23 (IKDVAKRANVSTTTVSHVIN) constitute a DNA-binding region (H-T-H motif). The DNA-binding element occupies 48-56 (SAVARSLKV). Hypoxanthine is bound by residues Tyr73, Arg190, Thr192, Phe221, and Asp275.

As to quaternary structure, homodimer.

The protein operates within purine metabolism; purine nucleotide biosynthesis [regulation]. Functionally, is the main repressor of the genes involved in the de novo synthesis of purine nucleotides, regulating purB, purC, purEK, purF, purHD, purL, purMN and guaBA expression. PurR is allosterically activated to bind its cognate DNA by binding the purine corepressors, hypoxanthine or guanine, thereby effecting transcription repression. The chain is HTH-type transcriptional repressor PurR from Salmonella typhi.